The sequence spans 961 residues: Gamma-tubulin small complex component GCP2 (961 aa).

Residues 15-76 form a disordered region; it reads NLHRSPKLAT…KPSIPPLKSE (62 aa). Residues 43 to 54 are compositionally biased toward polar residues; it reads LGSNVVSHPTRS. The span at 55 to 65 shows a compositional bias: basic and acidic residues; that stretch reads SPEKTTDKPAD.

This sequence belongs to the TUBGCP family. As to quaternary structure, component of the gamma-tubulin small complex (gamma-TuSC) composed of tubulin gamma chain, gamma-tubulin complex protein 2 (GCP2) and gamma-tubulin complex protein 3 (GCP3). Interacts with tubulin gamma chain.

The protein localises to the cytoplasm. The protein resides in the cytoskeleton. It is found in the flagellum axoneme. It localises to the flagellum basal body. Functionally, component of the gamma-tubulin small complex (gamma-TuSC) involved in microtubule (MT) nucleation for the formation of median bodies and in the biogenesis of flagella. Gamma-TuSC may be required for the correct positioning of EB1 within the trophozoites. In Giardia intestinalis (strain ATCC 50803 / WB clone C6) (Giardia lamblia), this protein is Gamma-tubulin small complex component GCP2.